Here is a 313-residue protein sequence, read N- to C-terminus: Ribosomal RNA small subunit methyltransferase H (313 aa).

S-adenosyl-L-methionine-binding positions include 35-37, aspartate 55, phenylalanine 79, aspartate 101, and glutamine 108; that span reads GGH.

The protein belongs to the methyltransferase superfamily. RsmH family.

It is found in the cytoplasm. The enzyme catalyses cytidine(1402) in 16S rRNA + S-adenosyl-L-methionine = N(4)-methylcytidine(1402) in 16S rRNA + S-adenosyl-L-homocysteine + H(+). Functionally, specifically methylates the N4 position of cytidine in position 1402 (C1402) of 16S rRNA. This chain is Ribosomal RNA small subunit methyltransferase H, found in Escherichia coli O6:H1 (strain CFT073 / ATCC 700928 / UPEC).